We begin with the raw amino-acid sequence, 494 residues long: PIGF/3-ketodihydrosphingosine reductase fusion protein (494 aa).

NADPH-binding residues include G20, S22, and G24. A GXSXG motif is present at residues 20–24 (GGSQG). L25 provides a ligand contact to NADP(+). The NADPH site is built by R45 and K49. V54 contributes to the NADP(+) binding site. NADPH-binding residues include D74 and L75. The chain crosses the membrane as a helical span at residues 148–168 (ILLVGSLLSSLPIIGYSAYSP). 3 residues coordinate NADP(+): Y166, K170, and I199. Y166 (proton acceptor) is an active-site residue. K170 (lowers pKa of active site Tyr) is an active-site residue. 6 consecutive transmembrane segments (helical) span residues 264 to 284 (HDNPILEYLFALVSLLAWPFY), 312 to 332 (IFTLLLTFTQLTIFYLSLNCL), 370 to 390 (LAGAASMLIGSLLISFILVAF), 402 to 422 (YFCALTLSVFTVYPLASTLAF), 444 to 464 (LRSWGPIIGAWFGAFPIPLDW), and 473 to 493 (ITIVIGAFLGYAFAAIVGEIL).

It in the N-terminal section; belongs to the short-chain dehydrogenases/reductases (SDR) family. The protein in the C-terminal section; belongs to the PIGF family.

It is found in the endoplasmic reticulum membrane. It carries out the reaction sphinganine + NADP(+) = 3-oxosphinganine + NADPH + H(+). It functions in the pathway glycolipid biosynthesis; glycosylphosphatidylinositol-anchor biosynthesis. Its pathway is lipid metabolism; sphingolipid metabolism. In terms of biological role, acts in the GPI biosynthetic pathway between GlcNAc-PI synthesis and GPI transfer to protein. Required for the formation of complete GPI precursors CP1 and CP2. Catalyzes the reduction of 3'-oxosphinganine (3-ketodihydrosphingosine/KDS) to sphinganine (dihydrosphingosine/DHS), the second step of de novo sphingolipid biosynthesis. This Schizosaccharomyces pombe (strain 972 / ATCC 24843) (Fission yeast) protein is PIGF/3-ketodihydrosphingosine reductase fusion protein.